We begin with the raw amino-acid sequence, 618 residues long: Syncytin-B (618 aa).

The N-terminal stretch at M1–S17 is a signal peptide. Over Y18–R545 the chain is Extracellular. An N-linked (GlcNAc...) asparagine glycan is attached at N27. The CXXC signature appears at C44–C47. Cystine bridges form between C44–C47, C44–C507, and C499–C506. N184, N274, and N357 each carry an N-linked (GlcNAc...) asparagine glycan. The fusion peptide stretch occupies residues L422 to L442. Positions L482–T498 are immunosuppression. The CX6CC motif lies at C499–C507. Residues W546 to F566 traverse the membrane as a helical segment. The Cytoplasmic portion of the chain corresponds to G567–T618.

This sequence belongs to the gamma type-C retroviral envelope protein family. As to quaternary structure, the mature protein consists of a trimer of SU-TM heterodimers. The SU-TM heterodimers are attached by a labile interchain disulfide bond. Post-translationally, synthesized as an inactive precursor that is heavily N-glycosylated and processed likely by furin in the Golgi to yield the mature SU and TM proteins. The cleavage site between SU and TM requires the minimal sequence [KR]-X-[KR]-R. The CXXC motif is highly conserved across a broad range of retroviral envelope proteins. It is thought to participate in the formation of a labile disulfide bond possibly with the CX6CC motif present in the transmembrane protein. Isomerization of the intersubunit disulfide bond to an SU intrachain disulfide bond is thought to occur upon receptor recognition in order to allow membrane fusion. In terms of tissue distribution, highly expressed in placenta where it localizes to syncytiotrophoblasts of the labyrinthine zona. Specifically localizes to syncytiotrophoblast layer II (SynT-II). Also detected at very low levels in ovary.

It is found in the cell membrane. This endogenous retroviral envelope protein has retained its original fusogenic properties. Together with Syna, participates in trophoblast fusion and the formation of a syncytium during placenta morphogenesis. Synb is specifically involved in formation of syncytiotrophoblast layer II (SynT-II). Promotes myoblast fusion, and may play a role in regeneration of damaged muscle tissue in males. May have immunosuppressive activity. The chain is Syncytin-B from Mus musculus (Mouse).